The sequence spans 527 residues: Neutrophil cytosol factor 2 (527 aa).

3 TPR repeats span residues 37–70 (SRICFNVGCIYTILGNLPEAEKAFTKSINRDKHL), 71–104 (AVSYFQRGMLYYQMEKYDSAIKDLKEALTQLRGN), and 121–154 (CEVLYNIAFMYAKREEWKKAEEHLALAVSMKSEP). Residue Thr233 is modified to Phosphothreonine. Residues 240-299 (LEGEAHRVLFGFVPETPEELQVMPGNIVFVLKKGNDNWATVMFNGQKGLVPCNYLEPVEL) enclose the SH3 1 domain. The disordered stretch occupies residues 304 to 345 (QQQPQEETSLESDIPAPPSSSAPGRPQLSPGQKGKEEPKQEI). Ser324 bears the Phosphoserine mark. Residues 336–345 (KGKEEPKQEI) show a composition bias toward basic and acidic residues. Residues 352-430 (SYTLKVHYKY…YCLTLWCENT (79 aa)) form the PB1 domain. The residue at position 400 (Ser400) is a Phosphoserine. Residues 434–457 (QGFPDEPEESKKSDANNQTTEPEL) are disordered. Residues 458-517 (KEGSKVVALFSYEATQPEDLEFLEGDVILVISTVNEQWLEGECKGKVGIFPKAFVEQHPT) form the SH3 2 domain.

It belongs to the NCF2/NOXA1 family. In terms of assembly, component of the phagocyte NADPH oxidase complex composed of an obligatory core heterodimer formed by the membrane proteins CYBA and CYBB and the cytosolic regulatory subunits NCF1/p47-phox, NCF2/p67-phox, NCF4/p40-phox and the small GTPase RAC1 or RAC2. Part of a cytosolic complex composed at least by NCF1, NCF2 and NCF4. Interacts with NCF4. Interacts (via the C-terminal SH3 domain) with NCF1 (via C-terminus). Interacts with SYTL1 and RAC1. May interact with NOXO1. Interacts with S100A8 and calprotectin (S100A8/9). Interacts with GBP7 (via GB1/RHD3-type G domain). Interacts with CYBB; the interaction is enhanced in the presence of GBP7.

Its subcellular location is the cytoplasm. Its function is as follows. Subunit of the phagocyte NADPH oxidase complex that mediates the transfer of electrons from cytosolic NADPH to O2 to produce the superoxide anion (O2(-)). In the activated complex, electrons are first transferred from NADPH to flavin adenine dinucleotide (FAD) and subsequently transferred via two heme molecules to molecular oxygen, producing superoxide through an outer-sphere reaction. Activation of the NADPH oxidase complex is initiated by the assembly of cytosolic subunits of the NADPH oxidase complex with the core NADPH oxidase complex to form a complex at the plasma membrane or phagosomal membrane. This activation process is initiated by phosphorylation dependent binding of the cytosolic NCF1/p47-phox subunit to the C-terminus of CYBA/p22-phox. The sequence is that of Neutrophil cytosol factor 2 from Bos taurus (Bovine).